A 202-amino-acid chain; its full sequence is Small ribosomal subunit protein uS4 (202 aa).

Residues 90-152 enclose the S4 RNA-binding domain; the sequence is MRLDNTVFRL…ERSRRLVETN (63 aa).

The protein belongs to the universal ribosomal protein uS4 family. In terms of assembly, part of the 30S ribosomal subunit. Contacts protein S5. The interaction surface between S4 and S5 is involved in control of translational fidelity.

Its function is as follows. One of the primary rRNA binding proteins, it binds directly to 16S rRNA where it nucleates assembly of the body of the 30S subunit. In terms of biological role, with S5 and S12 plays an important role in translational accuracy. The sequence is that of Small ribosomal subunit protein uS4 from Thermosynechococcus vestitus (strain NIES-2133 / IAM M-273 / BP-1).